A 236-amino-acid chain; its full sequence is MDSEIVERLTKLGFVKTSHTHIAGEPLVIHAVAGAGKTTLLRSLLELPGVEVFTGGEHDPPNLSGKYIRCAAPPVAGAYNILDEYPAYPNWRSQPWNVLIADNLQYKEPTARAHYTCNRTHRLGQLTVDALRRVGFDITFAGTQTEDYGFQEGHLYTSQFYGQVISLDTQAHKIAVRHGLAPLSALETRGLEFDETTVITTKTSLEEVKDRHMVYVALTRHRRTCHLYTAHFAPSA.

Residues 1–117 form the (+)RNA virus helicase ATP-binding domain; that stretch reads MDSEIVERLT…EPTARAHYTC (117 aa). The 119-residue stretch at 118 to 236 folds into the (+)RNA virus helicase C-terminal domain; that stretch reads NRTHRLGQLT…LYTAHFAPSA (119 aa).

This sequence belongs to the Tymovirales TGBp1 protein family. In terms of assembly, homodimer and homooligomer. Interacts with capsid protein. Interacts with host AGO1; this interaction targets the host protein for degradation, thereby suppressing the antiviral RNA silencing.

Its subcellular location is the host cytoplasm. Its function is as follows. Transports viral genome to neighboring plant cells directly through plasmosdesmata, without any budding. The movement protein allows efficient cell to cell propagation, by bypassing the host cell wall barrier. Increases plasmodesma size exclusion limit. Acts as a suppressor of RNA-mediated gene silencing, also known as post-transcriptional gene silencing (PTGS), a mechanism of plant viral defense that limits the accumulation of viral RNAs. This is Movement and silencing protein TGBp1 from Setaria italica (Foxtail millet).